The chain runs to 102 residues: Turripeptide OL55-like (102 aa).

Post-translationally, contains 8 disulfide bonds. As to expression, expressed by the venom duct.

The protein resides in the secreted. Acts as a neurotoxin by inhibiting an ion channel. The chain is Turripeptide OL55-like from Lophiotoma acuta (Marbled turris).